Consider the following 418-residue polypeptide: Gamma-glutamyl phosphate reductase (418 aa).

It belongs to the gamma-glutamyl phosphate reductase family.

It is found in the cytoplasm. It catalyses the reaction L-glutamate 5-semialdehyde + phosphate + NADP(+) = L-glutamyl 5-phosphate + NADPH + H(+). It functions in the pathway amino-acid biosynthesis; L-proline biosynthesis; L-glutamate 5-semialdehyde from L-glutamate: step 2/2. Functionally, catalyzes the NADPH-dependent reduction of L-glutamate 5-phosphate into L-glutamate 5-semialdehyde and phosphate. The product spontaneously undergoes cyclization to form 1-pyrroline-5-carboxylate. This is Gamma-glutamyl phosphate reductase from Clostridium acetobutylicum (strain ATCC 824 / DSM 792 / JCM 1419 / IAM 19013 / LMG 5710 / NBRC 13948 / NRRL B-527 / VKM B-1787 / 2291 / W).